A 539-amino-acid polypeptide reads, in one-letter code: T-complex protein 1 subunit delta (539 aa).

Residues 1 to 29 (MPENVAPRSGATAGAAGGRGKGAYQDRDK) are disordered. At Arg-19 the chain carries Omega-N-methylarginine. Position 21 is an N6-acetyllysine (Lys-21). The residue at position 36 (Ser-36) is a Phosphoserine. Gly-53 lines the ADP pocket. Gly-53 serves as a coordination point for ATP. Position 104 (Asp-104) interacts with Mg(2+). ADP contacts are provided by Gly-105, Thr-106, Thr-107, Ser-108, Asn-172, Ser-173, and Lys-174. Residues Gly-105 and Thr-106 each coordinate ATP. Lys-174 contributes to the ATP binding site. Ser-184 and Ser-202 each carry phosphoserine. Residues Lys-288, Lys-302, Lys-319, and Lys-326 each carry the N6-acetyllysine modification. Gly-425 contributes to the ADP binding site. Ser-444 carries the post-translational modification Phosphoserine. Gln-510 contributes to the ADP binding site.

This sequence belongs to the TCP-1 chaperonin family. In terms of assembly, component of the chaperonin-containing T-complex (TRiC), a hexadecamer composed of two identical back-to-back stacked rings enclosing a protein folding chamber. Each ring is made up of eight different subunits: TCP1/CCT1, CCT2, CCT3, CCT4, CCT5, CCT6A/CCT6, CCT7, CCT8. Interacts with PACRG. Interacts with DNAAF4. Interacts with DLEC1.

Its subcellular location is the cytoplasm. It is found in the melanosome. The protein resides in the cytoskeleton. The protein localises to the microtubule organizing center. It localises to the centrosome. Its subcellular location is the cilium basal body. It catalyses the reaction ATP + H2O = ADP + phosphate + H(+). In terms of biological role, component of the chaperonin-containing T-complex (TRiC), a molecular chaperone complex that assists the folding of actin, tubulin and other proteins upon ATP hydrolysis. The TRiC complex mediates the folding of WRAP53/TCAB1, thereby regulating telomere maintenance. As part of the TRiC complex may play a role in the assembly of BBSome, a complex involved in ciliogenesis regulating transports vesicles to the cilia. The polypeptide is T-complex protein 1 subunit delta (CCT4) (Homo sapiens (Human)).